The chain runs to 375 residues: Probable peptidoglycan glycosyltransferase FtsW (375 aa).

Residues 1–16 (MNLNFKLNLKEIERYD) are Cytoplasmic-facing. Residues 17–37 (LVILLMAVALTCFGVVMVYSA) form a helical membrane-spanning segment. Residues 38–49 (SSVMATKKFHDG) are Periplasmic-facing. The chain crosses the membrane as a helical span at residues 50-70 (FYFLKRQGIYAILGCAAMIVA). Over 71 to 81 (MRIDYRQWREY) the chain is Cytoplasmic. A helical membrane pass occupies residues 82 to 102 (AVPILLGCLLLLLLVFIPGIG). Residues 103–145 (GAAKGASRWIRFPGFNLQPSELAKIALIMYMAYSLDKKQEKVK) lie on the Periplasmic side of the membrane. Residues 146–166 (FFSTGFAPYMVLLAILLAILL) traverse the membrane as a helical segment. At 167–169 (KQH) the chain is on the cytoplasmic side. The chain crosses the membrane as a helical span at residues 170-190 (DLGSALTMGGVAILMLFAAGT). Topologically, residues 191–193 (RPR) are periplasmic. A helical membrane pass occupies residues 194-214 (YILGMVVLTLPFLYFLVMNVD). At 215–233 (YRRRRILAYLNPWEDPTNT) the chain is on the cytoplasmic side. A helical transmembrane segment spans residues 234–254 (GFQIIQSWLAFGNGGIIGQGL). The Periplasmic portion of the chain corresponds to 255–279 (GEGKQKMFFLPEAHTDFILSVVGEE). A helical transmembrane segment spans residues 280-300 (LGLIGVIVIAAMFLMLVLRGV). Over 301 to 312 (RVALMAQDPFGR) the chain is Cytoplasmic. A helical membrane pass occupies residues 313 to 333 (FLAFGIVTLLGIQAFVNMGVV). Topologically, residues 334–343 (TGLLPTKGLA) are periplasmic. Residues 344–364 (LPFISYGGSSLIVTLFAVGIL) traverse the membrane as a helical segment. Over 365 to 375 (LNVSTRMKGTP) the chain is Cytoplasmic.

The protein belongs to the SEDS family. FtsW subfamily.

Its subcellular location is the cell inner membrane. The enzyme catalyses [GlcNAc-(1-&gt;4)-Mur2Ac(oyl-L-Ala-gamma-D-Glu-L-Lys-D-Ala-D-Ala)](n)-di-trans,octa-cis-undecaprenyl diphosphate + beta-D-GlcNAc-(1-&gt;4)-Mur2Ac(oyl-L-Ala-gamma-D-Glu-L-Lys-D-Ala-D-Ala)-di-trans,octa-cis-undecaprenyl diphosphate = [GlcNAc-(1-&gt;4)-Mur2Ac(oyl-L-Ala-gamma-D-Glu-L-Lys-D-Ala-D-Ala)](n+1)-di-trans,octa-cis-undecaprenyl diphosphate + di-trans,octa-cis-undecaprenyl diphosphate + H(+). The protein operates within cell wall biogenesis; peptidoglycan biosynthesis. Peptidoglycan polymerase that is essential for cell division. In Geobacter metallireducens (strain ATCC 53774 / DSM 7210 / GS-15), this protein is Probable peptidoglycan glycosyltransferase FtsW.